The primary structure comprises 139 residues: Hydrogenase maturation factor HypA (139 aa).

Residue H2 participates in Ni(2+) binding. 4 residues coordinate Zn(2+): C75, C78, C111, and C114.

The protein belongs to the HypA/HybF family.

In terms of biological role, involved in the maturation of [NiFe] hydrogenases. Required for nickel insertion into the metal center of the hydrogenase. This Ignicoccus hospitalis (strain KIN4/I / DSM 18386 / JCM 14125) protein is Hydrogenase maturation factor HypA.